A 505-amino-acid chain; its full sequence is Maturase K (505 aa).

This sequence belongs to the intron maturase 2 family. MatK subfamily.

It is found in the plastid. It localises to the chloroplast. Its function is as follows. Usually encoded in the trnK tRNA gene intron. Probably assists in splicing its own and other chloroplast group II introns. The sequence is that of Maturase K from Chiococca alba (West Indian milkberry).